The primary structure comprises 220 residues: Regulatory protein VanRB (220 aa).

Residues 4 to 117 enclose the Response regulatory domain; it reads RILLVEDDDH…ILLKRVEALL (114 aa). D53 carries the 4-aspartylphosphate modification. A DNA-binding region (ompR/PhoB-type) is located at residues 124–218; it reads AKEFRVGRLT…IRGVGYRLEE (95 aa).

May be phosphorylated by VanSB. May also be dephosphorylated by VanSB.

Its subcellular location is the cytoplasm. Its function is as follows. Member of the two-component regulatory system VanSB/VanRB. Activates the transcription of vanSB, vanYB and vanW in response to vancomycin which results in vancomycin resistance. The protein is Regulatory protein VanRB (vanRB) of Enterococcus faecalis (strain ATCC 700802 / V583).